A 764-amino-acid polypeptide reads, in one-letter code: Complement factor B (764 aa).

The signal sequence occupies residues 1-25 (MGSNLSPQLCLMPFILGLLSGGVTT). 3 consecutive Sushi domains span residues 35 to 100 (GSCS…ECRA), 101 to 160 (IHCP…ICDN), and 163 to 220 (GYCS…SCQD). 6 disulfides stabilise this stretch: cysteine 37–cysteine 76, cysteine 62–cysteine 98, cysteine 103–cysteine 145, cysteine 131–cysteine 158, cysteine 165–cysteine 205, and cysteine 191–cysteine 218. Residues asparagine 122 and asparagine 142 are each glycosylated (N-linked (GlcNAc...) asparagine). Residues 270–469 (NIYLVLDGSD…NLEDVFYQMI (200 aa)) enclose the VWFA domain. Residues serine 278 and serine 280 each contribute to the Mg(2+) site. The Mn(2+) site is built by serine 278 and serine 280. Residue asparagine 285 is glycosylated (N-linked (GlcNAc...) asparagine). Lysine 291 carries N-linked (Glc) (glycation) lysine glycosylation. A Mg(2+)-binding site is contributed by threonine 353. Threonine 353 provides a ligand contact to Mn(2+). A glycan (N-linked (GlcNAc...) asparagine) is linked at asparagine 378. Positions 477–757 (LCGMVWEHRK…VLPWLKEKLQ (281 aa)) constitute a Peptidase S1 domain. 5 disulfides stabilise this stretch: cysteine 478/cysteine 596, cysteine 511/cysteine 527, cysteine 599/cysteine 615, cysteine 656/cysteine 682, and cysteine 695/cysteine 725. Active-site charge relay system residues include histidine 526 and aspartate 576. Serine 699 acts as the Charge relay system in catalysis.

The protein belongs to the peptidase S1 family. Monomer. Interacts with complement C3b; this interaction is dependent on the presence of Mg(2+). As to quaternary structure, catalytic component of the C3 convertase of the alternative complement pathway, also named C3bBb, composed of complement factor B Bb and complement C3b. Catalytic component of the C5 convertase of the alternative complement pathway, also named C3bBb3b, composed of complement factor B Bb and additional molecules of complement C3b. Interacts to CFP; this interaction contributes to the stabilization of the active C3-convertase enzyme complex. The cofactor is Mg(2+). It depends on Mn(2+) as a cofactor. Cleaved by CFD following activation of the alternative complement system, generating Ba and Bb chains. Cleavage and activation takes place when CFB is already associated with complement C3b.

The protein resides in the secreted. It is found in the cell surface. The enzyme catalyses Cleavage of Arg-|-Ser bond in complement component C3 alpha-chain to yield C3a and C3b, and Arg-|-Xaa bond in complement component C5 alpha-chain to yield C5a and C5b.. Precursor of the catalytic component of the C3 and C5 convertase complexes of the alternative pathway of the complement system, a cascade of proteins that leads to phagocytosis and breakdown of pathogens and signaling that strengthens the adaptive immune system. The alternative complement pathway acts as an amplification loop that enhances other complement pathways (classical, lectin and GZMK) by promoting formation of additional C3 and C5 convertases. CFB is cleaved and activated by CFD to generate Ba and Bb chains; Bb chain constituting the catalytic component of the C3 and C5 convertases. Its function is as follows. Serine protease component of the complement C3 and C5 convertase complexes of the alternative complement pathway. Following cleavage and activation by factor D (CFD), forms the C3 convertase together with complement C3b. As part of the C3 convertase, cleaves and activates C3 into C3a anaphylatoxin and C3b opsonin, the next components of the complement pathways. When an additional complement C3b molecule binds to the C3 convertase, forms the C5 convertase, which cleaves and activates C5 into C5a anaphylatoxin and C5b component of the membrane attack complex. In terms of biological role, involved in proliferation and differentiation of preactivated B-lymphocytes, rapid spreading of peripheral blood monocytes, stimulation of lymphocyte blastogenesis and lysis of erythrocytes. In Homo sapiens (Human), this protein is Complement factor B.